The chain runs to 432 residues: MLTGVTDGIFCCLLGAPPNAVGPLESVESSDGYTFVEVKPGRVLRVKHAGPAPAPTPPPPLSDAAQGDQSGLVRCQRRITVYRNGRLLVENLGRAPRADLLHGQNGSGEPPAALEVELADPAGSDGRSVPGSAGSGSGGRRRRARRPKRTIHIDCEKRITSCKGAQADVVLFFIHGVGGSLAIWKEQLDFFVRLGYEVVAPDLAGHGASSAPQVAAAYTFYALAEDMRAIFKRYAKKRNVLIGHSYGVSFCTFLAHEYPDLVHKVIMINGGGPTALEPSLCSVFNMPTCVLHCLSPCLAWSFLKAGFARQGAKEKQLLKEGNAFNVSSFVLRAMMSGQYWPEGDEVYHAELTVPVLLVHGMHDKFVPVEEDQRMAEILLLAFLKLIDEGSHMVMLECPETVNTLLHEFLLWEPEPSPKALPEPLPAPPEEKK.

Disordered stretches follow at residues 47 to 69 (KHAG…QGDQ) and 121 to 149 (PAGS…RPKR). The segment covering 52-61 (APAPTPPPPL) has biased composition (pro residues). A compositionally biased stretch (basic residues) spans 139-149 (GRRRRARRPKR). In terms of domain architecture, AB hydrolase-1 spans 170-272 (VLFFIHGVGG…HKVIMINGGG (103 aa)). Active-site charge relay system residues include Ser245, Asp363, and His391.

It belongs to the AB hydrolase superfamily. In terms of assembly, interacts with NLRP3 (via NACHT and LLR domains); this interaction is enhanced in the presence of NLRP3 inflammasome inducers, such as ATP, nigericin, silica, or alum. Interacts with ZDHHC12.

The protein localises to the cytoplasm. Functionally, negatively regulates NLRP3-driven inflammation. Promotes NLRP3 degradation through the chaperone-mediated autophagy (CMA) pathway, hence attenuating inflammasome activation and IL1B secretion. Acts by recruiting palmitoyltransferase ZDHHC12 to NLRP3, facilitating NLRP3 palmitoylation and subsequent degradation. The chain is Protein ABHD8 from Bos taurus (Bovine).